The primary structure comprises 260 residues: Activator of 90 kDa heat shock protein ATPase homolog 2 (260 aa).

It belongs to the AHA1 family.

Functionally, co-chaperone that stimulates HSP90 ATPase activity. This is Activator of 90 kDa heat shock protein ATPase homolog 2 (AHSA2) from Bos taurus (Bovine).